The chain runs to 98 residues: UPF0235 protein CCNA_03737 (98 aa).

It belongs to the UPF0235 family.

In Caulobacter vibrioides (strain NA1000 / CB15N) (Caulobacter crescentus), this protein is UPF0235 protein CCNA_03737.